We begin with the raw amino-acid sequence, 350 residues long: Probable sugar phosphate/phosphate translocator At4g32390 (350 aa).

Transmembrane regions (helical) follow at residues 15-35 (ILLS…VIVY), 49-69 (FPIT…VILI), 89-109 (VVPI…AYIY), 112-132 (VSFI…IGVL), 146-166 (MLSI…FDTW), 168-188 (VMLQ…IQIL), 205-225 (VAPC…LPIL), 235-255 (FVIF…VFLL), 263-283 (TMNV…WSVI), and 286-306 (TVTP…AYYN). Positions 38–155 (YILDKKMYNW…MLSISFGVAI (118 aa)) constitute an EamA domain. The disordered stretch occupies residues 324 to 350 (QGDEEEAGKLLEERESEAAAKRNETED).

Belongs to the TPT transporter family. TPT (TC 2.A.7.9) subfamily.

It is found in the membrane. This is Probable sugar phosphate/phosphate translocator At4g32390 from Arabidopsis thaliana (Mouse-ear cress).